We begin with the raw amino-acid sequence, 342 residues long: Oxygen-dependent coproporphyrinogen-III oxidase (342 aa).

Residue S98 coordinates substrate. A divalent metal cation contacts are provided by H102 and H112. The active-site Proton donor is H112. Substrate is bound at residue 114 to 116 (NYR). 2 residues coordinate a divalent metal cation: H146 and H176. The important for dimerization stretch occupies residues 266–301 (YVEFNLVWDRGTIFGLQTNGRTESILMSLPPLARWE).

It belongs to the aerobic coproporphyrinogen-III oxidase family. As to quaternary structure, homodimer. Requires a divalent metal cation as cofactor.

It localises to the cytoplasm. It catalyses the reaction coproporphyrinogen III + O2 + 2 H(+) = protoporphyrinogen IX + 2 CO2 + 2 H2O. It functions in the pathway porphyrin-containing compound metabolism; protoporphyrin-IX biosynthesis; protoporphyrinogen-IX from coproporphyrinogen-III (O2 route): step 1/1. In terms of biological role, involved in the heme and chlorophyll biosynthesis. Catalyzes the aerobic oxidative decarboxylation of propionate groups of rings A and B of coproporphyrinogen-III to yield the vinyl groups in protoporphyrinogen-IX. The chain is Oxygen-dependent coproporphyrinogen-III oxidase from Prochlorococcus marinus subsp. pastoris (strain CCMP1986 / NIES-2087 / MED4).